The sequence spans 663 residues: Polyunsaturated fatty acid lipoxygenase ALOX15 (663 aa).

One can recognise a PLAT domain in the interval 2-115; the sequence is GLYRVRVSTG…ILSLPEGTAR (114 aa). The 548-residue stretch at 116 to 663 folds into the Lipoxygenase domain; the sequence is TVVDDPQGLF…PSRVENSVAI (548 aa). Residues histidine 361, histidine 366, histidine 541, histidine 545, and isoleucine 663 each contribute to the Fe cation site.

Belongs to the lipoxygenase family. As to quaternary structure, interacts with PEBP1; in response to IL13/interleukin-13, prevents the interaction of PEBP1 with RAF1 to activate the ERK signaling cascade. Requires Fe cation as cofactor.

Its subcellular location is the cytoplasm. The protein localises to the cytosol. It localises to the cell membrane. The protein resides in the lipid droplet. The enzyme catalyses (5Z,8Z,11Z,14Z)-eicosatetraenoate + O2 = (12S)-hydroperoxy-(5Z,8Z,10E,14Z)-eicosatetraenoate. The catalysed reaction is (5Z,8Z,11Z,14Z)-eicosatetraenoate + O2 = (15S)-hydroperoxy-(5Z,8Z,11Z,13E)-eicosatetraenoate. It catalyses the reaction (9Z,12Z)-octadecadienoate + O2 = (13S)-hydroperoxy-(9Z,11E)-octadecadienoate. It carries out the reaction (5Z,8Z,11Z,14Z)-eicosatetraenoate + 2 O2 = (14R,15S)-dihydroperoxy-(5Z,8Z,10E,12E)-eicosatetraenoate. The enzyme catalyses (5Z,8Z,11Z,14Z)-eicosatetraenoate + 2 O2 = (8S,15S)-dihydroperoxy-(5Z,9E,11Z,13E)-eicosatetraenoate. The catalysed reaction is (14S,15R)-epoxy-(5Z,8Z,11Z)-eicosatrienoate + O2 = (8S)-hydroperoxy-(14S,15R)-epoxy-(5Z,9E,11Z)-eicosatrienoate. It catalyses the reaction (14S,15R)-epoxy-(5Z,8Z,11Z)-eicosatrienoate + O2 = (12S)-hydroperoxy-(14S,15R)-epoxy-(5Z,8Z,10E)-eicosatrienoate. It carries out the reaction (14R,15S)-epoxy-(5Z,8Z,11Z)-eicosatrienoate + O2 = (5S)-hydroperoxy-(14R,15S)-epoxy-(6E,8Z,11Z)-eicosatrienoate. The enzyme catalyses (14R,15S)-epoxy-(5Z,8Z,11Z)-eicosatrienoate + O2 = (12S)-hydroperoxy-(14R,15S)-epoxy-(5Z,8Z,10E)-eicosatrienoate. The catalysed reaction is (15R)-hydroperoxy-(5Z,8Z,11Z,13E)-eicosatetraenoate = 15-oxo-(5Z,8Z,11Z,13E)-eicosatetraenoate + H2O. It catalyses the reaction (15S)-hydroperoxy-(5Z,8Z,11Z,13E)-eicosatetraenoate = (14S,15S)-epoxy-(5Z,8Z,10E,12E)-eicosatetraenoate + H2O. It carries out the reaction (12S)-hydroperoxy-(5Z,8Z,10E,14Z)-eicosatetraenoate = (8S)-hydroxy-(11S,12S)-epoxy-(5Z,9E,14Z)-eicosatrienoate. The enzyme catalyses (4Z,7Z,10Z,13Z,16Z,19Z)-docosahexaenoate + O2 = 14-hydroperoxy-(4Z,7Z,10Z,12E,16Z,19Z)-docosahexaenoate. The catalysed reaction is (4Z,7Z,10Z,13Z,16Z)-docosapentaenoate + O2 = 14-hydroperoxy-(4Z,7Z,10Z,12E,16Z)-docosapentaenoate. It catalyses the reaction (7Z,10Z,13Z,16Z,19Z)-docosapentaenoate + O2 = 14-hydroperoxy-(7Z,10Z,12E,16Z,19Z)-docosapentaenoate. It carries out the reaction (4Z,7Z,10Z,13Z,16Z,19Z)-docosahexaenoate + O2 = (14S)-hydroperoxy-(4Z,7Z,10Z,12E,16Z,19Z)-docosahexaenoate. The enzyme catalyses (4Z,7Z,10Z,13Z,16Z,19Z)-docosahexaenoate + O2 = (17S)-hydroperoxy-(4Z,7Z,10Z,13Z,15E,19Z)-docosahexaenoate. The catalysed reaction is (7S)-hydroperoxy-(4Z,8E,10Z,13Z,16Z,19Z)-docosahexaenoate + O2 = (7S,14S)-dihydroperoxy-(4Z,8E,10Z,12E,16Z,19Z)-docosahexaenoate. It catalyses the reaction (7S)-hydroperoxy-(4Z,8E,10Z,13Z,16Z,19Z)-docosahexaenoate + O2 = (7S,17S)-dihydroperoxy-(4Z,8E,10Z,13Z,15E,19Z)-docosahexaenoate. It carries out the reaction (4Z,7Z,10Z,13Z,16Z,19Z)-docosahexaenoate + O2 = (11S)-hydroperoxy-(4Z,7Z,9E,13Z,16Z,19Z)-docosahexaenoate. The enzyme catalyses N-(5Z,8Z,11Z,14Z)-eicosatetraenoyl-taurine + O2 = N-(12S)-hydroperoxy-(5Z,8Z,10E,14Z)-eicosatetraenoyl-taurine. The catalysed reaction is N-(5Z,8Z,11Z,14Z)-eicosatetraenoyl-gamma-aminobutanoate + O2 = N-(12S)-hydroperoxy-(5Z,8Z,10E,14Z)-eicosatetraenoyl-gamma-aminobutanoate. It catalyses the reaction N-(5Z,8Z,11Z,14Z)-eicosatetraenoyl-glycine + O2 = N-(12S)-hydroperoxy-(5Z,8Z,10E,14Z)-eicosatetraenoyl-glycine. It carries out the reaction N-(5Z,8Z,11Z,14Z)-eicosatetraenoyl-L-alanine + O2 = N-(12S)-hydroperoxy-(5Z,8Z,10E,14Z)-eicosatetraenoyl-alanine. The enzyme catalyses N-(5Z,8Z,11Z,14Z)-eicosatetraenoyl-taurine + O2 = N-(15S)-hydroperoxy-(5Z,8Z,11Z,13E)-eicosatetraenoyl-taurine. The catalysed reaction is N-(5Z,8Z,11Z,14Z)-eicosatetraenoyl-gamma-aminobutanoate + O2 = N-(15S)-hydroperoxy-(5Z,8Z,11Z,13E)-eicosatetraenoyl-gamma-aminobutanoate. It catalyses the reaction N-(5Z,8Z,11Z,14Z)-eicosatetraenoyl-glycine + O2 = N-(15S)-hydroperoxy-(5Z,8Z,11Z,13E)-eicosatetraenoyl-glycine. It carries out the reaction N-(5Z,8Z,11Z,14Z)-eicosatetraenoyl-L-alanine + O2 = N-(15S)-hydroperoxy-(5Z,8Z,11Z,13E)-eicosatetraenoyl-alanine. The protein operates within lipid metabolism; hydroperoxy eicosatetraenoic acid biosynthesis. Its function is as follows. Non-heme iron-containing dioxygenase that catalyzes the stereo-specific peroxidation of free and esterified polyunsaturated fatty acids generating a spectrum of bioactive lipid mediators. It inserts peroxyl groups at C12 or C15 of arachidonate ((5Z,8Z,11Z,14Z)-eicosatetraenoate) producing both 12-hydroperoxyeicosatetraenoate/12-HPETE and 15-hydroperoxyeicosatetraenoate/15-HPETE. It may then act on 12-HPETE to produce hepoxilins, which may show pro-inflammatory properties. Can also peroxidize linoleate ((9Z,12Z)-octadecadienoate) to 13-hydroperoxyoctadecadienoate. May participate in the sequential oxidations of DHA ((4Z,7Z,10Z,13Z,16Z,19Z)-docosahexaenoate) to generate specialized pro-resolving mediators (SPMs)like resolvin D5 ((7S,17S)-diHPDHA) and (7S,14S)-diHPDHA, that actively down-regulate the immune response and have anti-aggregation properties with platelets. Can convert epoxy fatty acids to hydroperoxy-epoxides derivatives followed by an intramolecular nucleophilic substitution leading to the formation of monocyclic endoperoxides. Plays an important role during the maintenance of self-tolerance by peroxidizing membrane-bound phosphatidylethanolamine which can then signal the sorting process for clearance of apoptotic cells during inflammation and prevent an autoimmune response. In addition to its role in the immune and inflammatory responses, this enzyme may play a role in epithelial wound healing in the cornea through production of lipoxin A4 (LXA(4)) and docosahexaenoic acid-derived neuroprotectin D1 (NPD1; 10R,17S-HDHA), both lipid autacoids exhibit anti-inflammatory and neuroprotective properties. Furthermore, it may regulate actin polymerization which is crucial for several biological processes such as the phagocytosis of apoptotic cells. It is also implicated in the generation of endogenous ligands for peroxisome proliferator activated receptor (PPAR-gamma), hence modulating macrophage development and function. It may also exert a negative effect on skeletal development by regulating bone mass through this pathway. As well as participates in ER stress and downstream inflammation in adipocytes, pancreatic islets, and liver. Finally, it is also involved in the cellular response to IL13/interleukin-13. The protein is Polyunsaturated fatty acid lipoxygenase ALOX15 of Sus scrofa (Pig).